The chain runs to 2238 residues: Protein Ycf2 (2238 aa).

Residue 1579–1586 (GSIGTGRS) coordinates ATP.

Belongs to the Ycf2 family.

The protein resides in the plastid. Functionally, probable ATPase of unknown function. Its presence in a non-photosynthetic plant (Epifagus virginiana) and experiments in tobacco indicate that it has an essential function which is probably not related to photosynthesis. The sequence is that of Protein Ycf2 from Cuscuta exaltata (Tall dodder).